A 242-amino-acid chain; its full sequence is tRNA (guanine-N(1)-)-methyltransferase (242 aa).

Residues Gly112 and 131 to 136 contribute to the S-adenosyl-L-methionine site; that span reads LGDFIL.

Belongs to the RNA methyltransferase TrmD family. As to quaternary structure, homodimer.

Its subcellular location is the cytoplasm. It catalyses the reaction guanosine(37) in tRNA + S-adenosyl-L-methionine = N(1)-methylguanosine(37) in tRNA + S-adenosyl-L-homocysteine + H(+). In terms of biological role, specifically methylates guanosine-37 in various tRNAs. The protein is tRNA (guanine-N(1)-)-methyltransferase of Crocosphaera subtropica (strain ATCC 51142 / BH68) (Cyanothece sp. (strain ATCC 51142)).